The following is a 430-amino-acid chain: Adenylosuccinate synthetase (430 aa).

GTP-binding positions include 13 to 19 (GDEGKGK) and 41 to 43 (GHT). Residue Asp-14 is the Proton acceptor of the active site. Mg(2+)-binding residues include Asp-14 and Gly-41. Residues 14–17 (DEGK), 39–42 (NAGH), Thr-130, Arg-144, Gln-225, Thr-240, and Arg-304 each bind IMP. The Proton donor role is filled by His-42. 300-306 (STTGRAR) provides a ligand contact to substrate. Residues Arg-306, 332-334 (KLD), and 414-416 (STG) each bind GTP.

It belongs to the adenylosuccinate synthetase family. As to quaternary structure, homodimer. It depends on Mg(2+) as a cofactor.

The protein localises to the cytoplasm. It catalyses the reaction IMP + L-aspartate + GTP = N(6)-(1,2-dicarboxyethyl)-AMP + GDP + phosphate + 2 H(+). The protein operates within purine metabolism; AMP biosynthesis via de novo pathway; AMP from IMP: step 1/2. Its function is as follows. Plays an important role in the de novo pathway of purine nucleotide biosynthesis. Catalyzes the first committed step in the biosynthesis of AMP from IMP. This is Adenylosuccinate synthetase from Alcanivorax borkumensis (strain ATCC 700651 / DSM 11573 / NCIMB 13689 / SK2).